Here is a 625-residue protein sequence, read N- to C-terminus: Pyriculol/pyriculariol biosynthesis cluster transcription factor 1 (625 aa).

Disordered regions lie at residues 1 to 83 (MATE…ATQD) and 466 to 496 (PMSA…LPAS). Residues 46 to 59 (TPSPSTPANPNSAS) show a composition bias toward low complexity. Positions 73-132 (KNQKRQRATQDQLTTLEQEFAKNPTPTATVRDRIAEEINMTERSVQIWFQNRRAKIKLMA) form a DNA-binding region, homeobox. Over residues 467 to 496 (MSATTAPSPSEYNSPSFFSQAPENTPLPAS) the composition is skewed to polar residues.

The protein localises to the nucleus. Transcriptional regulator; part of the gene cluster that mediates the biosynthesis of pyriculol and pyriculariol, two heptaketides that induce lesion formation upon application on rice leaves but are dispensable for pathogenicity. With TRF1, negatively regulates the expression of the gene cluster and the subsequent pyriculol and pyriculariol production. This Pyricularia oryzae (strain 70-15 / ATCC MYA-4617 / FGSC 8958) (Rice blast fungus) protein is Pyriculol/pyriculariol biosynthesis cluster transcription factor 1.